Consider the following 89-residue polypeptide: Small ribosomal subunit protein uS15 (89 aa).

Residues 1–21 (MSLHQERKSELVSKFRTHESD) are compositionally biased toward basic and acidic residues. A disordered region spans residues 1-25 (MSLHQERKSELVSKFRTHESDTGSP).

Belongs to the universal ribosomal protein uS15 family. In terms of assembly, part of the 30S ribosomal subunit. Forms a bridge to the 50S subunit in the 70S ribosome, contacting the 23S rRNA.

In terms of biological role, one of the primary rRNA binding proteins, it binds directly to 16S rRNA where it helps nucleate assembly of the platform of the 30S subunit by binding and bridging several RNA helices of the 16S rRNA. Functionally, forms an intersubunit bridge (bridge B4) with the 23S rRNA of the 50S subunit in the ribosome. The protein is Small ribosomal subunit protein uS15 of Myxococcus xanthus (strain DK1622).